Here is a 276-residue protein sequence, read N- to C-terminus: ATP synthase subunit a (276 aa).

Transmembrane regions (helical) follow at residues 49-69, 109-129, 137-157, 173-193, 203-223, 232-252, and 253-273; these read KPMLQLVLAAIVLFVFFFAAA, YLFTLFFFILLNNAFGSIPFI, SGMVYGLAVLSWVIYNAAGIS, GIRGPILALLIPLEFMSNILV, FANMFAGHLLLILFALGGEYI, APVGILAWLMFVAVAFLEMLI, and QFLQAYVFVLLNAMYISGAVA.

The protein belongs to the ATPase A chain family. As to quaternary structure, F-type ATPases have 2 components, CF(1) - the catalytic core - and CF(0) - the membrane proton channel. CF(1) has five subunits: alpha(3), beta(3), gamma(1), delta(1), epsilon(1). CF(0) has three main subunits: a(1), b(2) and c(9-12). The alpha and beta chains form an alternating ring which encloses part of the gamma chain. CF(1) is attached to CF(0) by a central stalk formed by the gamma and epsilon chains, while a peripheral stalk is formed by the delta and b chains.

It is found in the cell membrane. Its function is as follows. Key component of the proton channel; it plays a direct role in the translocation of protons across the membrane. The sequence is that of ATP synthase subunit a from Nocardioides sp. (strain ATCC BAA-499 / JS614).